We begin with the raw amino-acid sequence, 349 residues long: MSSVEPDMEDLFQEKKRVRNPLVPLGALMTAGVLTAGLISFRRGNSQLGQVLMRARVVVQGATVALMVGTGYYYGDNPWKKLLLSEIHETEALSPKSSSAATLTLMNQKDPSSSSIVSVLCLVISGLALIIVFLGVLYLIFKFLRKSSTLFPIPHFNYNPDLFSFSSPQLQHLFFLHDSGLDQTAIDALPVFLYGNVTISLEQPFDCAVCLNEFSDTDKLRLLPVCSHAFHLHCIDTWLLSNSTCPLCRRSLSTSNVCYNHSETLVAPLSGHQQVDDGKASLAKRVFSVRLGRFKSTNESQSQRHDVKDEIGVRMPRRCYSMGTQQYLVCDQDFVVALSSSPREGNIGR.

The 85-residue stretch at 1–85 folds into the HIG1 domain; the sequence is MSSVEPDMED…DNPWKKLLLS (85 aa). Residue serine 2 is modified to N-acetylserine. Helical transmembrane passes span 21-41, 55-75, and 121-141; these read PLVP…LISF, ARVV…YYYG, and CLVI…YLIF. Residues 207 to 249 form an RING-type; atypical zinc finger; the sequence is CAVCLNEFSDTDKLRLLPVCSHAFHLHCIDTWLLSNSTCPLCR.

It belongs to the RING-type zinc finger family. ATL subfamily.

The protein localises to the membrane. The catalysed reaction is S-ubiquitinyl-[E2 ubiquitin-conjugating enzyme]-L-cysteine + [acceptor protein]-L-lysine = [E2 ubiquitin-conjugating enzyme]-L-cysteine + N(6)-ubiquitinyl-[acceptor protein]-L-lysine.. It functions in the pathway protein modification; protein ubiquitination. In Arabidopsis thaliana (Mouse-ear cress), this protein is RING-H2 finger protein ATL48 (ATL48).